The primary structure comprises 242 residues: Zinc import ATP-binding protein ZnuC (242 aa).

Residues 24–241 (INVKDLSFAY…EKFLKMFSSY (218 aa)) enclose the ABC transporter domain. Residue 56-63 (GPNGGGKT) participates in ATP binding.

This sequence belongs to the ABC transporter superfamily. Zinc importer (TC 3.A.1.15.5) family. The complex is composed of two ATP-binding proteins (ZnuC), two transmembrane proteins (ZnuB) and a solute-binding protein (ZnuA).

It localises to the cell inner membrane. It carries out the reaction Zn(2+)(out) + ATP(in) + H2O(in) = Zn(2+)(in) + ADP(in) + phosphate(in) + H(+)(in). Functionally, part of the ABC transporter complex ZnuABC involved in zinc import. Responsible for energy coupling to the transport system. The chain is Zinc import ATP-binding protein ZnuC from Ehrlichia ruminantium (strain Gardel).